The sequence spans 55 residues: Histone H1 (55 aa).

Over residues 1-15 (MAEVAPAPAAAAPAK) the composition is skewed to low complexity. The disordered stretch occupies residues 1-28 (MAEVAPAPAAAAPAKAPKKKAAAKPKKA). Ala2 is modified (N-acetylalanine). A compositionally biased stretch (basic residues) spans 16 to 27 (APKKKAAAKPKK). The 28-residue stretch at 28–55 (AGPSVGELIVKAVSASKERSGVSLAALK) folds into the H15 domain.

It belongs to the histone H1/H5 family.

Its subcellular location is the nucleus. The protein localises to the chromosome. It localises to the secreted. Functionally, histones H1 are necessary for the condensation of nucleosome chains into higher-order structures. In terms of biological role, SAMP H1 has antibacterial activity against Gram-negative bacteria E.coli, A.salmonicida subsp salmonicida, V.anguillarum and S.typhimurium and Gram-positive bacteria B.subtilis and L.ivanovii. This Salmo salar (Atlantic salmon) protein is Histone H1.